A 519-amino-acid polypeptide reads, in one-letter code: Zinc finger and BTB domain-containing protein 18.3 (519 aa).

Positions 24–91 (CDCTVLVGDA…MYEGKLQFKD (68 aa)) constitute a BTB domain. The segment at 189-227 (ASIPQTGGEVDTHTTAAGKTADSPCSSTGSLSHRSATSM) is disordered. Polar residues predominate over residues 201 to 227 (HTTAAGKTADSPCSSTGSLSHRSATSM). 4 consecutive C2H2-type zinc fingers follow at residues 367–389 (FMCP…LSTH), 407–429 (PTCS…ERTH), 435–457 (FTCT…AVVH), and 463–486 (HACK…RKFH).

It belongs to the krueppel C2H2-type zinc-finger protein family. ZBTB18 subfamily.

The protein resides in the nucleus. Functionally, transcriptional repressor that plays a role in various developmental processes. Specifically binds the consensus DNA sequence 5'-[AC]ACATCTG[GT][AC]-3' which contains the E box core, and acts by recruiting chromatin remodeling multiprotein complexes. The polypeptide is Zinc finger and BTB domain-containing protein 18.3 (zbtb18.3) (Xenopus laevis (African clawed frog)).